The chain runs to 192 residues: Phosphoheptose isomerase (192 aa).

An SIS domain is found at 37–192 (LADSFKAGGK…IQLIEKEMVK (156 aa)). 52-54 (NGG) is a binding site for substrate. The Zn(2+) site is built by H61 and E65. Substrate-binding positions include E65, 93–94 (ND), 119–121 (STS), S124, and Q172. Q172 and H180 together coordinate Zn(2+).

This sequence belongs to the SIS family. GmhA subfamily. In terms of assembly, homotetramer. It depends on Zn(2+) as a cofactor.

The protein localises to the cytoplasm. It carries out the reaction 2 D-sedoheptulose 7-phosphate = D-glycero-alpha-D-manno-heptose 7-phosphate + D-glycero-beta-D-manno-heptose 7-phosphate. Its pathway is carbohydrate biosynthesis; D-glycero-D-manno-heptose 7-phosphate biosynthesis; D-glycero-alpha-D-manno-heptose 7-phosphate and D-glycero-beta-D-manno-heptose 7-phosphate from sedoheptulose 7-phosphate: step 1/1. Functionally, catalyzes the isomerization of sedoheptulose 7-phosphate in D-glycero-D-manno-heptose 7-phosphate. This Escherichia coli O139:H28 (strain E24377A / ETEC) protein is Phosphoheptose isomerase.